Reading from the N-terminus, the 342-residue chain is Epoxide hydrolase srdG (342 aa).

The region spanning 44–332 (ATVLLLHGWP…LIHTPEEVNK (289 aa)) is the AB hydrolase-1 domain. The Nucleophile role is filled by Asp122. Residue His320 is the Proton acceptor of the active site.

Belongs to the AB hydrolase superfamily. Epoxide hydrolase family.

In terms of biological role, highly reducing polyketide synthase; part of the gene cluster that mediates the biosynthesis of sordarial, a salicylic aldehyde structurally related to the phytotoxin pyriculol. The most interesting aspect of this pathway is formation of an aromatic product from the highly reducing polyketide synthase srdA. SrdA synthesizes a reduced polyketide chain from one molecule of acetyl-CoA and five molecules of malonyl-CoA. The polyketide chain is then reductively released as an aldehyde. The oxidoreductases srdC, srdD and srdE then oxidize one of the hydroxy groups to facilitate the intramolecular aldol condensation, followed by dehydration to yield a salicylic aldehyde. This aldehyde can undergo facile reduction by endogenous reductases to yield the alcohol 1-hydroxy-2-hydroxymethyl-3-pent-1,3-dienylbenzene. The flavin-dependent srdI counteract against the propensity of the aldehydes to be reduced under physiological conditions and is responsible for reoxidizing 1-hydroxy-2-hydroxymethyl-3-pent-1,3-dienylbenzene back to the salicylic aldehyde. This salicylic aldehyde is then selectively epoxidized by the cupin-domain-containing oxidoreductase srdB to yield the epoxide, which can be hydrolyzed stereoselectively by the hydrolase srdG to give the final product sordarial. The polypeptide is Epoxide hydrolase srdG (Neurospora crassa (strain ATCC 24698 / 74-OR23-1A / CBS 708.71 / DSM 1257 / FGSC 987)).